Consider the following 198-residue polypeptide: Paired-like homeodomain transcription factor LEUTX (198 aa).

The segment at residues 33-67 (PSLATMGKLASKLQLDLSVVKIWFKNQRAKWKRQQ) is a DNA-binding region (homeobox). The tract at residues 65 to 133 (RQQRQQMQTR…PGGASASARV (69 aa)) is disordered. Residues 79 to 190 (PANQTTSVKK…NQYLFPVCLE (112 aa)) are LEUTX region. The span at 110 to 119 (ANDHDLREPS) shows a compositional bias: basic and acidic residues. 4 consecutive short sequence motifs (9aaTAD) follow at residues 125 to 136 (GGASASARVSSW), 153 to 161 (PPWASTLFE), 163 to 171 (DEFVKIYDL), and 178 to 186 (SSLNQYLFP).

The protein belongs to the paired homeobox family.

The protein resides in the nucleus. Paired-like homeobox transcription factor involved in embryogenesis. May act as a regulator of embryo genome activation. Binds to a 36 bp DNA elements containing a 5'-TAATCC-3' sequence motif, referred to as EEA motif (EGA-enriched Alu-motif), present in the promoters of target genes activated in early embryos. Functionally, inactive transcriptional activity. The chain is Paired-like homeodomain transcription factor LEUTX from Homo sapiens (Human).